Consider the following 377-residue polypeptide: Mucin-7 (377 aa).

A signal peptide spans 1–22 (MKTLPLFVCICALSACFSFSEG). The disordered stretch occupies residues 70–100 (CRPKLPPSPNNPPKFPNPHQPPKHPDKNSSV). The segment covering 73–89 (KLPPSPNNPPKFPNPHQ) has biased composition (pro residues). N-linked (GlcNAc...) asparagine glycosylation is found at asparagine 97, asparagine 128, asparagine 135, and asparagine 146. A disordered region spans residues 150 to 355 (SVATLAPVNS…QPTSAPGQNK (206 aa)). 6 consecutive repeat copies span residues 165–187 (TTAA…APPE), 188–210 (TTAA…APPE), 211–233 (TTAA…APPE), 234–256 (TTAA…APPE), 257–279 (TTAV…APPE), and 280–302 (TTAA…APQE). A compositionally biased stretch (pro residues) spans 169–183 (PPTPSATTPAPPSSS). Residue threonine 176 is glycosylated (O-linked (GalNAc) threonine; by GALNT13). O-linked (GalNAc) serine; by GALNT13 glycosylation is found at serine 182 and serine 183. Over residues 184–214 (APPETTAAPPTPSATTQAPPSSSAPPETTAA) the composition is skewed to low complexity. O-linked (GalNAc) threonine; by GALNT13 glycosylation is found at threonine 188 and threonine 189. The span at 215 to 229 (PPTPPATTPAPPSSS) shows a compositional bias: pro residues. Low complexity predominate over residues 230–283 (APPETTAAPPTPSATTPAPLSSSAPPETTAVPPTPSATTLDPSSASAPPETTAA). The segment covering 284-298 (PPTPSATTPAPPSSP) has biased composition (pro residues). Residues 309–329 (TTPNSSPTTLAPDTSETSAAP) are compositionally biased toward polar residues. Positions 330–348 (THQTTTSVTTQTTTTKQPT) are enriched in low complexity.

As to quaternary structure, monomer. N- and O-glycosylated. Contains fucose, mannose, galactose, N-acetylglucosamine and N-acetylgalactosamine. In terms of tissue distribution, expressed in salivary gland tissues and only in those that contain mucous acinar cells (e.g. sublingual and submandibular glands) and not in salivary glands containing only serous acinar cells (e.g. parotid gland).

The protein resides in the secreted. Its function is as follows. May function in a protective capacity by promoting the clearance of bacteria in the oral cavity and aiding in mastication, speech, and swallowing. Binds P.aeruginosa pili. The polypeptide is Mucin-7 (MUC7) (Homo sapiens (Human)).